The primary structure comprises 503 residues: LEM domain-containing protein 2 (503 aa).

Alanine 2 carries the post-translational modification N-acetylalanine. Residues 2–42 (AGLSDLELRRELQALGFQPGPITDTTRDVYRNKLRRLRGEA) form the LEM domain. A compositionally biased stretch (basic and acidic residues) spans 42–74 (ARLRDEERLREEARPRGEERLREEARLREDAPL). Disordered regions lie at residues 42 to 97 (ARLR…SGSA) and 127 to 157 (AQLR…GPGL). The required for nuclear retention and interaction with LMNA isoform C stretch occupies residues 74 to 130 (LRARPAAASPRAEPWLSQPASGSAYATPGAYGDIRPSAASWVGSRGLAYPARPAQLR). Residues 75 to 87 (RARPAAASPRAEP) are compositionally biased toward low complexity. A phosphoserine mark is found at serine 166 and serine 175. The interval 172-198 (LPSSLLGPDPRPGLRATRAGPAGAARA) is disordered. Residues 184-197 (GLRATRAGPAGAAR) show a composition bias toward low complexity. Transmembrane regions (helical) follow at residues 213–233 (LLLW…WVKM) and 377–397 (VTNV…LILL). Residues 395–503 (ILLKYRWRKL…KPSSFSDSER (109 aa)) are winged-Helix (WH). Phosphoserine occurs at positions 497, 499, and 501.

Interacts (via N-terminus) with LMNA isoform C (via C-terminus) (in vitro). Interacts (via LEM domain) with BANF1. Interacts (via C-terminus) with CHMP7. Interacts (via N-terminus) with tubulin; the interaction causes microtubule bundling and stabilization (in vitro). Post-translationally, phosphorylated; strongly phosphorylated in mitosis compared to G1/S. As to expression, ubiquitously expressed, including bone marrow, brain, kidney, colon, skeletal muscle, thymus, testis and uterus.

It localises to the nucleus inner membrane. It is found in the nucleus envelope. The protein localises to the cytoplasm. Its subcellular location is the cytoskeleton. The protein resides in the spindle. Nuclear lamina-associated inner nuclear membrane protein that is involved in nuclear structure organization, maintenance of nuclear envelope (NE) integrity and NE reformation after mitosis. Plays a role as transmembrane adapter for the endosomal sorting complexes required for transport (ESCRT), and is thereby involved in ESCRT-mediated NE reformation. Promotes ESCRT-mediated NE closure by recruiting CHMP7 and downstream ESCRT-III proteins IST1/CHMP8 and CHMP2A to the reforming NE during anaphase. During nuclear reassembly, condenses into a liquid-like coating around microtubule spindles and coassembles with CHMP7 to form a macromolecular O-ring seal at the confluence between membranes, chromatin, and the spindle to facilitate early nuclear sealing. Plays a role in the organization of heterochromatin associated with the NE and in the maintenance of NE organization under mechanical stress. Required for embryonic development and involved in regulation of several signaling pathways such as MAPK and AKT. Required for myoblast differentiation involving regulation of ERK signaling. Essential for cardiac homeostasis and proper heart function. In Homo sapiens (Human), this protein is LEM domain-containing protein 2 (LEMD2).